Reading from the N-terminus, the 848-residue chain is ATP-dependent Clp protease ATP-binding subunit ClpC1 (848 aa).

Residues 2 to 144 (FERFTDRARK…RQQVIQLLSG (143 aa)) form the Clp R domain. Repeat regions lie at residues 5-70 (FTDR…IGQG) and 80-144 (FTPR…LLSG). Residues 171–418 (LDQFGRNLTA…RMRIRRMTAP (248 aa)) form an i region. 216 to 223 (GEPGVGKT) serves as a coordination point for ATP. The UVR domain occupies 425–460 (DEKIAEARREKESAIDAQDFEKAASLRDREKTLVAQ). The tract at residues 479-670 (VDDEQIAEVL…VLIFTSNLGT (192 aa)) is II. 553 to 560 (GPSGVGKT) is an ATP binding site. Positions 821–848 (TGTRKPPAEPDLAKAGAHSAGGPEPAAR) are disordered.

Belongs to the ClpA/ClpB family. ClpC subfamily.

Its function is as follows. ATP-dependent specificity component of the Clp protease. It directs the protease to specific substrates. Can perform chaperone functions in the absence of ClpP. In Mycobacterium tuberculosis (strain CDC 1551 / Oshkosh), this protein is ATP-dependent Clp protease ATP-binding subunit ClpC1 (clpC1).